The following is a 342-amino-acid chain: Ferredoxin--NADP reductase (342 aa).

Residues cysteine 17, aspartate 36, glutamine 44, tyrosine 49, isoleucine 89, phenylalanine 124, aspartate 289, and threonine 330 each contribute to the FAD site.

This sequence belongs to the ferredoxin--NADP reductase type 2 family. In terms of assembly, homodimer. The cofactor is FAD.

It catalyses the reaction 2 reduced [2Fe-2S]-[ferredoxin] + NADP(+) + H(+) = 2 oxidized [2Fe-2S]-[ferredoxin] + NADPH. The protein is Ferredoxin--NADP reductase of Rhodopseudomonas palustris (strain HaA2).